The sequence spans 983 residues: UPF0746 protein DDB_G0280809 (983 aa).

Residues 1–21 are compositionally biased toward basic and acidic residues; the sequence is MISNKRKEIDTINEHHEKNND. The disordered stretch occupies residues 1-26; it reads MISNKRKEIDTINEHHEKNNDDSDGI. The SAP domain occupies 42 to 76; the sequence is SGSTNYRELQIIAKSLGLASNGKKQLVYNRIEGYF. The tract at residues 391 to 413 is disordered; the sequence is HTTPTSTSTSTSTSTSTYTSTST. Residues 392–413 are compositionally biased toward low complexity; the sequence is TTPTSTSTSTSTSTSTYTSTST.

The protein belongs to the UPF0746 family.

The chain is UPF0746 protein DDB_G0280809 from Dictyostelium discoideum (Social amoeba).